A 439-amino-acid chain; its full sequence is Nuclear hormone receptor family member nhr-97 (439 aa).

Polar residues predominate over residues 1 to 13 (MSGDAQPSSNQRA). Residues 1-22 (MSGDAQPSSNQRATEARPPPSP) are disordered. Residues 32-108 (GALCVVCGDR…VGMKIEAVKM (77 aa)) constitute a DNA-binding region (nuclear receptor). 2 consecutive NR C4-type zinc fingers follow at residues 35–56 (CVVCGDRACSHLYYGVAACHGC) and 72–96 (CRYGGNCSISTAGRNACRYCRFHRC). The disordered stretch occupies residues 112–135 (LTKRKKEKTDEDDTDDGGSHESFE). In terms of domain architecture, NR LBD spans 173-408 (FVQPSLQNLL…GEGLLFWQLY (236 aa)).

Belongs to the nuclear hormone receptor family.

Its subcellular location is the nucleus. Orphan nuclear receptor. This chain is Nuclear hormone receptor family member nhr-97 (nhr-97), found in Caenorhabditis elegans.